The primary structure comprises 418 residues: Geranylgeranyl pyrophosphate synthase (418 aa).

Residues 51-64 show a composition bias toward polar residues; sequence TSSTGIPTSLNATP. Residues 51-73 are disordered; sequence TSSTGIPTSLNATPTKPVLRPVP. K143, R146, and H175 together coordinate isopentenyl diphosphate. 2 residues coordinate Mg(2+): D182 and D186. R191 provides a ligand contact to dimethylallyl diphosphate. R192 lines the isopentenyl diphosphate pocket. Dimethylallyl diphosphate is bound by residues K269, T270, Q305, K322, and K332.

This sequence belongs to the FPP/GGPP synthase family. Requires Mg(2+) as cofactor.

It is found in the cytoplasm. It carries out the reaction isopentenyl diphosphate + dimethylallyl diphosphate = (2E)-geranyl diphosphate + diphosphate. The enzyme catalyses isopentenyl diphosphate + (2E)-geranyl diphosphate = (2E,6E)-farnesyl diphosphate + diphosphate. The catalysed reaction is isopentenyl diphosphate + (2E,6E)-farnesyl diphosphate = (2E,6E,10E)-geranylgeranyl diphosphate + diphosphate. It participates in isoprenoid biosynthesis; farnesyl diphosphate biosynthesis; farnesyl diphosphate from geranyl diphosphate and isopentenyl diphosphate: step 1/1. The protein operates within isoprenoid biosynthesis; geranyl diphosphate biosynthesis; geranyl diphosphate from dimethylallyl diphosphate and isopentenyl diphosphate: step 1/1. It functions in the pathway isoprenoid biosynthesis; geranylgeranyl diphosphate biosynthesis; geranylgeranyl diphosphate from farnesyl diphosphate and isopentenyl diphosphate: step 1/1. Catalyzes the trans-addition of the three molecules of IPP onto DMAPP to form geranylgeranyl pyrophosphate. The polypeptide is Geranylgeranyl pyrophosphate synthase (GGS) (Fusarium fujikuroi (Bakanae and foot rot disease fungus)).